Consider the following 90-residue polypeptide: Putative membrane protein insertion efficiency factor (90 aa).

This sequence belongs to the UPF0161 family.

The protein resides in the cell membrane. Functionally, could be involved in insertion of integral membrane proteins into the membrane. In Lactococcus lactis subsp. cremoris (strain SK11), this protein is Putative membrane protein insertion efficiency factor.